The primary structure comprises 287 residues: 4-hydroxybenzoate octaprenyltransferase (287 aa).

6 consecutive transmembrane segments (helical) span residues 41 to 61 (LPLLVIFTVGTVLMRSAGCAI), 92 to 112 (VALAAALSLLAFLLILPLNAL), 133 to 153 (FFAIPQAYLGIAFGFGIPMAF), 160 to 180 (VPMLAWVMLLANVFWSVAYDT), 218 to 238 (LGIYVGIGVLLGFGALYWLGW), and 267 to 287 (NNWLGGALFAGIAAHYAATWF).

The protein belongs to the UbiA prenyltransferase family. Mg(2+) is required as a cofactor.

It is found in the cell inner membrane. It carries out the reaction all-trans-octaprenyl diphosphate + 4-hydroxybenzoate = 4-hydroxy-3-(all-trans-octaprenyl)benzoate + diphosphate. It functions in the pathway cofactor biosynthesis; ubiquinone biosynthesis. In terms of biological role, catalyzes the prenylation of para-hydroxybenzoate (PHB) with an all-trans polyprenyl group. Mediates the second step in the final reaction sequence of ubiquinone-8 (UQ-8) biosynthesis, which is the condensation of the polyisoprenoid side chain with PHB, generating the first membrane-bound Q intermediate 3-octaprenyl-4-hydroxybenzoate. This is 4-hydroxybenzoate octaprenyltransferase from Paraburkholderia xenovorans (strain LB400).